A 454-amino-acid polypeptide reads, in one-letter code: Kynurenine--oxoglutarate transaminase 3 (454 aa).

Residue G71 participates in substrate binding. An N6-acetyllysine; alternate modification is found at K116. At K116 the chain carries N6-succinyllysine; alternate. N218 is a substrate binding site. K280 is modified (N6-(pyridoxal phosphate)lysine). Position 429 (R429) interacts with substrate.

This sequence belongs to the class-I pyridoxal-phosphate-dependent aminotransferase family. As to quaternary structure, homodimer. Pyridoxal 5'-phosphate is required as a cofactor.

The enzyme catalyses L-kynurenine + 2-oxoglutarate = kynurenate + L-glutamate + H2O. It catalyses the reaction L-kynurenine + glyoxylate = kynurenate + glycine + H2O. The catalysed reaction is 3-hydroxy-L-kynurenine + glyoxylate = xanthurenate + glycine + H2O. It carries out the reaction an S-substituted L-cysteine + H2O = a thiol + pyruvate + NH4(+). The protein operates within amino-acid degradation; L-kynurenine degradation; kynurenate from L-kynurenine: step 1/2. In terms of biological role, catalyzes the irreversible transamination of the L-tryptophan metabolite L-kynurenine to form kynurenic acid (KA), an intermediate in the tryptophan catabolic pathway which is also a broad spectrum antagonist of the three ionotropic excitatory amino acid receptors among others. May catalyze the beta-elimination of S-conjugates and Se-conjugates of L-(seleno)cysteine, resulting in the cleavage of the C-S or C-Se bond. Has transaminase activity towards L-kynurenine, tryptophan, phenylalanine, serine, cysteine, methionine, histidine, glutamine and asparagine with glyoxylate as an amino group acceptor (in vitro). Has lower activity with 2-oxoglutarate as amino group acceptor (in vitro). The protein is Kynurenine--oxoglutarate transaminase 3 of Rattus norvegicus (Rat).